The following is a 322-amino-acid chain: Interferon regulatory factor 1 (322 aa).

Positions 5 to 113 form a DNA-binding region, IRF tryptophan pentad repeat; it reads RMRMRPWLEM…SAVRVYRMLP (109 aa). N6-acetyllysine is present on K78. Residues 92–164 are disordered; it reads EEVKDQSRNK…STLPDDHSNY (73 aa). The span at 146–157 shows a compositional bias: polar residues; it reads DTFSDGLSSSTL. Residues K276 and K296 each participate in a glycyl lysine isopeptide (Lys-Gly) (interchain with G-Cter in SUMO) cross-link.

Belongs to the IRF family. Monomer. Homodimer. Interacts with EP300. Interacts with MYD88. Interacts with PIAS3. Interacts with SPOP. Post-translationally, phosphorylated by CK2 and this positively regulates its activity. In terms of processing, sumoylation represses the transcriptional activity and displays enhanced resistance to protein degradation. Sumoylated by UBE2I/UBC9 and SUMO1. Inactivates the tumor suppressor activity. Elevated levels in tumor cells. Major site is Lys-276. Sumoylation is enhanced by PIAS3. Desumoylated by SENP1 in tumor cells and appears to compete with ubiquitination on C-terminal sites. Ubiquitinated in a SPOP-depedent manner. Appears to compete with sumoylation on C-terminal sites.

The protein resides in the nucleus. It is found in the cytoplasm. Its activity is regulated as follows. Activated by MYD88. Its function is as follows. Transcriptional regulator which displays a remarkable functional diversity in the regulation of cellular responses. Regulates transcription of IFN and IFN-inducible genes, host response to viral and bacterial infections, regulation of many genes expressed during hematopoiesis, inflammation, immune responses and cell proliferation and differentiation, regulation of the cell cycle and induction of growth arrest and programmed cell death following DNA damage. Stimulates both innate and acquired immune responses through the activation of specific target genes and can act as a transcriptional activator and repressor regulating target genes by binding to an interferon-stimulated response element (ISRE) in their promoters. Has an essentail role in IFNG-dependent immunity to mycobacteria. Binds to a consensus sequence in gene promoters. Its target genes for transcriptional activation activity include: genes involved in anti-viral response, such as IFN-alpha/beta, RIGI, TNFSF10/TRAIL, ZBP1, OAS1/2, PIAS1/GBP, EIF2AK2/PKR and RSAD2/viperin; antibacterial response, such as GBP2, GBP5 and NOS2/INOS; anti-proliferative response, such as p53/TP53, LOX and CDKN1A; apoptosis, such as BBC3/PUMA, CASP1, CASP7 and CASP8; immune response, such as IL7, IL12A/B and IL15, PTGS2/COX2 and CYBB; DNA damage responses and DNA repair, such as POLQ/POLH; MHC class I expression, such as TAP1, PSMB9/LMP2, PSME1/PA28A, PSME2/PA28B and B2M and MHC class II expression, such as CIITA; metabolic enzymes, such as ACOD1/IRG1. Represses genes involved in anti-proliferative response, such as BIRC5/survivin, CCNB1, CCNE1, CDK1, CDK2 and CDK4 and in immune response, such as FOXP3, IL4, ANXA2 and TLR4. Stimulates p53/TP53-dependent transcription through enhanced recruitment of EP300 leading to increased acetylation of p53/TP53. Plays an important role in immune response directly affecting NK maturation and activity, macrophage production of IL12, Th1 development and maturation of CD8+ T-cells. Also implicated in the differentiation and maturation of dendritic cells and in the suppression of regulatory T (Treg) cells development. Acts as a tumor suppressor and plays a role not only in antagonism of tumor cell growth but also in stimulating an immune response against tumor cells. This is Interferon regulatory factor 1 (IRF1) from Bos taurus (Bovine).